A 91-amino-acid chain; its full sequence is uncharacterized protein (91 aa).

The protein resides in the plastid. Its subcellular location is the cyanelle. This is an uncharacterized protein from Cyanophora paradoxa.